The following is a 174-amino-acid chain: MASGDVLPRFYTVFLSCVSSNSLLIPRSYYEHLPRRLPKTAILTGTGGRVWKVAMMSKREQVYLARGWENFVADNELKDGEFLTFVFDGYKSYEVSIYGRGSCKETRAVVHVEEISDESESDNDSLGSLVDVTPMPAEENSDDTEGDNDSCDSVVDVTPMPVEEISDASDSDYY.

A DNA-binding region (TF-B3) is located at residues 8–101; the sequence is PRFYTVFLSC…SYEVSIYGRG (94 aa). The tract at residues 114–174 is disordered; it reads EISDESESDN…ISDASDSDYY (61 aa). Acidic residues-rich tracts occupy residues 139–150 and 164–174; these read ENSDDTEGDNDS and EISDASDSDYY.

The protein resides in the nucleus. This chain is B3 domain-containing protein At3g06220, found in Arabidopsis thaliana (Mouse-ear cress).